A 116-amino-acid chain; its full sequence is NADH-ubiquinone oxidoreductase chain 3 (116 aa).

3 helical membrane-spanning segments follow: residues 3–23 (LITTIITITITLSAVLATISF), 56–76 (FFLIAILFLLFDLEIALLLPL), and 87–107 (LTLIWSTAVLALLTLGLIYEW).

This sequence belongs to the complex I subunit 3 family.

It localises to the mitochondrion membrane. It carries out the reaction a ubiquinone + NADH + 5 H(+)(in) = a ubiquinol + NAD(+) + 4 H(+)(out). In terms of biological role, core subunit of the mitochondrial membrane respiratory chain NADH dehydrogenase (Complex I) that is believed to belong to the minimal assembly required for catalysis. Complex I functions in the transfer of electrons from NADH to the respiratory chain. The immediate electron acceptor for the enzyme is believed to be ubiquinone. This is NADH-ubiquinone oxidoreductase chain 3 (MT-ND3) from Oncorhynchus mykiss (Rainbow trout).